Reading from the N-terminus, the 385-residue chain is Protein GOLM2 (385 aa).

At 1–12 (MVGFGAPRRTGR) the chain is on the cytoplasmic side. Residues 13-33 (LPPFVLVALLAVIGLLAFNYW) form a helical; Signal-anchor for type II membrane protein membrane-spanning segment. Residues 34 to 385 (SVSARQAALH…YHKDHLNETL (352 aa)) lie on the Lumenal side of the membrane. Residues 44–193 (DELLGLQAQV…KEELDKQPQK (150 aa)) are a coiled coil. The disordered stretch occupies residues 169–385 (LAERKREYEE…YHKDHLNETL (217 aa)). Basic and acidic residues-rich tracts occupy residues 170-193 (AERK…QPQK) and 211-220 (EVKEKIEDPS). A compositionally biased stretch (polar residues) spans 265 to 283 (LPSQSKSLLEKQPSLQPLS). Over residues 285-299 (TEHEVKKPLPDKKET) the composition is skewed to basic and acidic residues. Positions 356-367 (NGDDGNVEDDDH) are enriched in acidic residues. A compositionally biased stretch (basic and acidic residues) spans 368–385 (DGQADAGEYHKDHLNETL).

Belongs to the GOLM family.

The protein localises to the membrane. The chain is Protein GOLM2 (golm2) from Xenopus laevis (African clawed frog).